Consider the following 180-residue polypeptide: Cytidylate kinase (180 aa).

An ATP-binding site is contributed by 7–15 (GLPGSGTTT).

Belongs to the cytidylate kinase family. Type 2 subfamily.

Its subcellular location is the cytoplasm. The enzyme catalyses CMP + ATP = CDP + ADP. The catalysed reaction is dCMP + ATP = dCDP + ADP. This Methanosarcina barkeri (strain Fusaro / DSM 804) protein is Cytidylate kinase.